Reading from the N-terminus, the 314-residue chain is Vomeronasal type-1 receptor 95 (314 aa).

Residues 1–18 lie on the Extracellular side of the membrane; the sequence is MNKDNTLYCSAYRIAFFS. Residues 19 to 39 form a helical membrane-spanning segment; it reads EIGIGISANSCLLLFHTFMFI. Residues 40–48 lie on the Cytoplasmic side of the membrane; that stretch reads RGHRPRLTD. Residues 49-69 traverse the membrane as a helical segment; that stretch reads LPIGLVALIHLVMLLLAAYIT. Residues 70–88 lie on the Extracellular side of the membrane; that stretch reads EDFFMSSGGWDDITCKLFI. Cysteines 84 and 171 form a disulfide. A helical transmembrane segment spans residues 89–113; that stretch reads FLHRFFRSLSVCDTCMLSVFQAIIL. Topologically, residues 114 to 133 are cytoplasmic; sequence CPQSSHLAKFKLNSPHHLSC. A helical transmembrane segment spans residues 134 to 154; the sequence is FFIFMSIFYTSISSHILIAAI. Over 155–186 the chain is Extracellular; sequence ATQNLTSVNLIYITKSCSFLPMSSSMQRTFST. Residue asparagine 158 is glycosylated (N-linked (GlcNAc...) asparagine). Residues 187 to 207 form a helical membrane-spanning segment; it reads LLAFRNVFLIGLMGLSTCYMA. Topologically, residues 208 to 235 are cytoplasmic; it reads TLLCRHKTRSQQLQNSKLSPKATPEQRA. The chain crosses the membrane as a helical span at residues 236 to 256; the sequence is IWTILMLMSFFLIISTFDSIM. Topologically, residues 257–268 are extracellular; it reads TYSRTIFQGNQS. Asparagine 266 is a glycosylation site (N-linked (GlcNAc...) asparagine). A helical membrane pass occupies residues 269 to 289; sequence LYCVQIPVAHGYAAFSPLLVL. Residues 290–314 lie on the Cytoplasmic side of the membrane; sequence NNEKRLTSLMISMYDRIVRLESLCS.

Belongs to the G-protein coupled receptor 1 family.

It is found in the cell membrane. Its function is as follows. Putative pheromone receptor implicated in the regulation of social as well as reproductive behavior. This chain is Vomeronasal type-1 receptor 95 (Vom1r95), found in Rattus norvegicus (Rat).